A 190-amino-acid polypeptide reads, in one-letter code: Crossover junction endodeoxyribonuclease RuvC (190 aa).

Residues aspartate 8, glutamate 67, and aspartate 139 contribute to the active site. Residues aspartate 8, glutamate 67, and aspartate 139 each coordinate Mg(2+).

This sequence belongs to the RuvC family. Homodimer which binds Holliday junction (HJ) DNA. The HJ becomes 2-fold symmetrical on binding to RuvC with unstacked arms; it has a different conformation from HJ DNA in complex with RuvA. In the full resolvosome a probable DNA-RuvA(4)-RuvB(12)-RuvC(2) complex forms which resolves the HJ. Mg(2+) is required as a cofactor.

It localises to the cytoplasm. It carries out the reaction Endonucleolytic cleavage at a junction such as a reciprocal single-stranded crossover between two homologous DNA duplexes (Holliday junction).. Its function is as follows. The RuvA-RuvB-RuvC complex processes Holliday junction (HJ) DNA during genetic recombination and DNA repair. Endonuclease that resolves HJ intermediates. Cleaves cruciform DNA by making single-stranded nicks across the HJ at symmetrical positions within the homologous arms, yielding a 5'-phosphate and a 3'-hydroxyl group; requires a central core of homology in the junction. The consensus cleavage sequence is 5'-(A/T)TT(C/G)-3'. Cleavage occurs on the 3'-side of the TT dinucleotide at the point of strand exchange. HJ branch migration catalyzed by RuvA-RuvB allows RuvC to scan DNA until it finds its consensus sequence, where it cleaves and resolves the cruciform DNA. The protein is Crossover junction endodeoxyribonuclease RuvC of Haemophilus influenzae (strain ATCC 51907 / DSM 11121 / KW20 / Rd).